The following is a 108-amino-acid chain: UPF0060 membrane protein YnfA (108 aa).

The Periplasmic portion of the chain corresponds to 1–5; sequence MIKTT. A helical membrane pass occupies residues 6–26; sequence LLFFATALCEIIGCFLPWLWL. At 27 to 30 the chain is on the cytoplasmic side; it reads KRNA. Residues 31–51 traverse the membrane as a helical segment; sequence SIWLLLPAGISLALFVWLLTL. The Periplasmic portion of the chain corresponds to 52 to 60; sequence HPAASGRVY. Residues 61-81 form a helical membrane-spanning segment; sequence AAYGGVYVCTALMWLRVVDGV. The Cytoplasmic portion of the chain corresponds to 82–84; that stretch reads KLT. A helical transmembrane segment spans residues 85 to 105; the sequence is LYDWTGALIALCGMLIIVAGW. The Periplasmic portion of the chain corresponds to 106-108; the sequence is GRT.

The protein belongs to the UPF0060 family.

It is found in the cell inner membrane. This Escherichia coli O139:H28 (strain E24377A / ETEC) protein is UPF0060 membrane protein YnfA.